A 178-amino-acid polypeptide reads, in one-letter code: ATP synthase subunit delta (178 aa).

This sequence belongs to the ATPase delta chain family. In terms of assembly, F-type ATPases have 2 components, F(1) - the catalytic core - and F(0) - the membrane proton channel. F(1) has five subunits: alpha(3), beta(3), gamma(1), delta(1), epsilon(1). F(0) has three main subunits: a(1), b(2) and c(10-14). The alpha and beta chains form an alternating ring which encloses part of the gamma chain. F(1) is attached to F(0) by a central stalk formed by the gamma and epsilon chains, while a peripheral stalk is formed by the delta and b chains.

It localises to the cell membrane. F(1)F(0) ATP synthase produces ATP from ADP in the presence of a proton or sodium gradient. F-type ATPases consist of two structural domains, F(1) containing the extramembraneous catalytic core and F(0) containing the membrane proton channel, linked together by a central stalk and a peripheral stalk. During catalysis, ATP synthesis in the catalytic domain of F(1) is coupled via a rotary mechanism of the central stalk subunits to proton translocation. Its function is as follows. This protein is part of the stalk that links CF(0) to CF(1). It either transmits conformational changes from CF(0) to CF(1) or is implicated in proton conduction. This chain is ATP synthase subunit delta, found in Anoxybacillus flavithermus (strain DSM 21510 / WK1).